A 287-amino-acid chain; its full sequence is O-ureido-serine racemase (287 aa).

Asn20 is a binding site for substrate. The active-site Proton donor is Cys81. Substrate-binding positions include Gly82–Asn83, Asn167, Asn200, and Glu218–Tyr219. Cys227 acts as the Proton acceptor in catalysis. Gly228–Ser229 contacts substrate.

It belongs to the diaminopimelate epimerase family. In terms of assembly, monomer.

The protein resides in the cytoplasm. The enzyme catalyses O-ureido-L-serine = O-ureido-D-serine. Its activity is regulated as follows. Inhibited by thiol-inactivating reagents such as iodoacetamide and Hg(2+) ions. Its function is as follows. Involved in the biosynthesis of the antibiotic D-cycloserine (DCS), a cyclic structural analog of D-alanine, used as an antitubercular agent. Catalyzes the stereoinversion of O-ureido-L-serine to O-ureido-D-serine. In Streptomyces lavendulae, this protein is O-ureido-serine racemase.